The sequence spans 89 residues: Acylphosphatase (89 aa).

One can recognise an Acylphosphatase-like domain in the interval Ala-3 to Pro-89. Active-site residues include Arg-18 and Asn-36.

It belongs to the acylphosphatase family.

The catalysed reaction is an acyl phosphate + H2O = a carboxylate + phosphate + H(+). In Pseudothermotoga lettingae (strain ATCC BAA-301 / DSM 14385 / NBRC 107922 / TMO) (Thermotoga lettingae), this protein is Acylphosphatase (acyP).